Reading from the N-terminus, the 250-residue chain is Green-light absorbing proteorhodopsin (250 aa).

The N-terminal stretch at Met-1–Ala-18 is a signal peptide. At Ala-19 to Tyr-29 the chain is on the extracellular side. A helical membrane pass occupies residues Thr-30–Asp-53. The Cytoplasmic portion of the chain corresponds to Arg-54–Lys-58. A helical membrane pass occupies residues Trp-59–Thr-87. The Extracellular segment spans residues Gly-88–Ser-90. A helical transmembrane segment spans residues Pro-91 to Thr-118. The Cytoplasmic portion of the chain corresponds to Asn-119–Ala-121. Residues Gly-122–Ala-144 traverse the membrane as a helical segment. Residues Gly-145 to Met-147 lie on the Extracellular side of the membrane. The helical transmembrane segment at Ala-148 to Asn-177 threads the bilayer. Over Thr-178–Ser-180 the chain is Cytoplasmic. Residues Pro-181–Gly-208 form a helical membrane-spanning segment. At Tyr-209–Leu-218 the chain is on the extracellular side. Residues Asn-219–Asn-249 traverse the membrane as a helical segment. Lys-232 is subject to N6-(retinylidene)lysine. A topological domain (cytoplasmic) is located at residue Ala-250.

The protein belongs to the archaeal/bacterial/fungal opsin family. In terms of assembly, homopentamer. GPR protomers assemble into a pentamer around a central pore with a C5 symmetry axis. Contains one covalently linked retinal chromophore per subunit.

It localises to the cell membrane. Functionally, light-driven proton pump. The sequence is that of Green-light absorbing proteorhodopsin from Unknown prokaryotic organism.